Consider the following 221-residue polypeptide: Glutathione S-transferase U25 (221 aa).

At A2 the chain carries N-acetylalanine. Residues 3-82 (DEVILLDFWP…YIDEVWPSKT (80 aa)) enclose the GST N-terminal domain. Residues 13–14 (SM), 39–40 (NK), 53–54 (KI), and 66–67 (ES) contribute to the glutathione site. The GST C-terminal domain maps to 88 to 208 (DPYQRAQAKF…LPDSEKIIKF (121 aa)). At T149 the chain carries Phosphothreonine.

It belongs to the GST superfamily. Tau family.

The protein localises to the cytoplasm. The protein resides in the cytosol. The enzyme catalyses RX + glutathione = an S-substituted glutathione + a halide anion + H(+). In terms of biological role, may be involved in the conjugation of reduced glutathione to a wide number of exogenous and endogenous hydrophobic electrophiles and have a detoxification role against certain herbicides. The protein is Glutathione S-transferase U25 (GSTU25) of Arabidopsis thaliana (Mouse-ear cress).